The chain runs to 376 residues: DNA replication and repair protein RecF (376 aa).

35–42 (GDNGSGKT) is a binding site for ATP.

Belongs to the RecF family.

It localises to the cytoplasm. Functionally, the RecF protein is involved in DNA metabolism; it is required for DNA replication and normal SOS inducibility. RecF binds preferentially to single-stranded, linear DNA. It also seems to bind ATP. In Agrobacterium fabrum (strain C58 / ATCC 33970) (Agrobacterium tumefaciens (strain C58)), this protein is DNA replication and repair protein RecF.